The chain runs to 55 residues: Accessory gland-specific peptide 70A (55 aa).

Residues 1-19 form the signal peptide; that stretch reads MKTLSVFLVLVCLLGLVQS. Residues Pro28, Pro32, Pro34, and Pro38 each carry the hydroxyproline modification. Cys43 and Cys55 are disulfide-bonded.

Main cells of the accessory glands of males (paragonial gland).

It localises to the secreted. In terms of biological role, represses female sexual receptivity and stimulates oviposition. The protein is Accessory gland-specific peptide 70A (Acp70A) of Drosophila sechellia (Fruit fly).